The primary structure comprises 1574 residues: MSEARRGIFPFSKIKLMLASPEDIRSWSHGEVKRPETLNYRTLKPEKDGLFCAKIFGPIKDYECLCGKYRGKRYEGKICEKCGVEVTTSYVRRQRFGHIELAAPVVHIWFLKSTPSKIGTLLNLTSRDVERVAYFESYLVIEYPNEEEEEKFEKDEHTIPLNDGISTKWVKLHVVNEEEFEEKYAFTIDEKYEHGMGAEILKEVLSKLDLDAYSRKLKEIVKPYSIGFEDLGKEIEQKYKNLYQKLIKVIADDFRAYGVEIKGLEDHGLSLEQAIHRILNEELYLNVETGEISLEDCGDSCLTGRDALKEYYERVREHKKDIPIFEKIKEDIRSTVLREISEARIRKALRTLQLVEGFKKSGNRPEWMILEVLPVLPPELRPLVALDGGRFATSDLNDFYRRVINRNNRLKRLIELNAPDIIIRNEKRMLQEAVDALIDNGKRGNPVKQNGRPLKSLADYLKGKQGRFRQNLLGKRVDYSGRSVIVVGPELQMHQCGLPKIMALELFKPFVYRRLEEKGYATSIKHAKRLVEQKTPEVWECLEEVVKEHPVLLNRAPTLHRPSIQAFEPVLVEGKAIQLHPLVCPPFNADFDGDQMAVHVPLGIEAQLESYILMLSTQNVLSPAHGKPLTMPSQDMVLGTYYITHDPIPGRKGEGKAFGTFEEVLKALELGHVDIHAKIKVKVGNEWIETTPGRVLFNSIMPEGQPFVNKTLDKKGLSKLITELYIRVGNEETVKFLDRVKELGFLRSTLAGISIGVEDLQVPKAKKKIIEEALKKTEEIWNQYVQGIITNKERYNRIIDVWSEATNLVSKAMFEEIEKSKRIENGKEYPGTFNPIYMMAISGARGNRDQIRQLAGMRGLMAKHSGEFIETPIISNFREGLSVLEYFISTYGARKGLADTALKTAFAGYLTRRLVDVAQDITITERDCGTVKGFEMEPIVEAGEERVPLKDRIFGRVLAEDVKDPYTGEIIARRNEVIDEKLAEKITKAGIEKVRVRSPLTCEAKHGVCAMCYGWDLSQRKIVSVGEAVGIIAAQSIGEPGTQLTMRTFHIGGAATAQKVQSFVKAESDGKVKFYNVKLIVNRKGEKINISKDAAIGIVDEEGRLLERHTIPYGARILVEEGQEVKAETKLADWDPFNTYIIAEVGGKVELRDIILDVTVREERDPITGKTASVISFMRPRDAMLHTPRIAVITEDGKEYIYDLPVNAILNIPPEKISLEWRVCPTCSESEETTIQHQYYVVKDLEVQPGDILARIPKETAKVRDIVGGLPRVEELFEARKPKNPAILSEIDGYVKIYEDADEVIIFNPRTGETAKYSIKKDELILVRHGQFVKKGQKITETKVAEIDGQVRIKGRGFKVIVYNPETGLQREYFVPKGKFLLVKEGDFVKAGDQLTDGTPVPEEILRIKGIEELEKFLLKEVQMVYKLQGVDINDKHFEIIIKQMLKKVRIIDPGDSRFLVGEEVDKEELEEEIQRIKLEGGKLPKAEPVLVGITRAALSTRSWISAASFQETTRVLTDASVEGKIDELRGLKENVIIGNIIPAGTGVDEYREVDVIPAEEKVLEEKKEPKEGS.

Positions 64, 66, 79, and 82 each coordinate Zn(2+). Mg(2+)-binding residues include D590, D592, and D594. Zn(2+) contacts are provided by C928, C1002, C1009, and C1012.

The protein belongs to the RNA polymerase beta' chain family. In terms of assembly, the RNAP catalytic core consists of 2 alpha, 1 beta, 1 beta' and 1 omega subunit. When a sigma factor is associated with the core the holoenzyme is formed, which can initiate transcription. Mg(2+) is required as a cofactor. Requires Zn(2+) as cofactor.

The catalysed reaction is RNA(n) + a ribonucleoside 5'-triphosphate = RNA(n+1) + diphosphate. In terms of biological role, DNA-dependent RNA polymerase catalyzes the transcription of DNA into RNA using the four ribonucleoside triphosphates as substrates. In Aquifex aeolicus (strain VF5), this protein is DNA-directed RNA polymerase subunit beta'.